A 494-amino-acid chain; its full sequence is DBIRD complex subunit ZNF326 (494 aa).

Disordered stretches follow at residues 1-22 (MDREYGSYNQRSVNSYGNQSFS), 147-170 (AFGGRSNDAFGGPSKGRGRGRGQM), and 202-264 (KMAP…NSEK). The segment covering 7–22 (SYNQRSVNSYGNQSFS) has biased composition (polar residues). The Bipartite nuclear localization signal signature appears at 200–221 (KRKMAPPFKPVGFFGKKQKLSK). 2 C2H2 AKAP95-type zinc fingers span residues 273 to 295 (CSFCKFRSFDEKGIEEHLTSATH) and 365 to 388 (CSACSVYVPALHSSVQLHLKSADH). Positions 429–494 (PFETQPDEQQ…CDPLTTTDEV (66 aa)) are disordered. Residues 433–451 (QPDEQQQEQEEEEEEEEQQ) are compositionally biased toward acidic residues.

This sequence belongs to the AKAP95 family. As to quaternary structure, component of the DBIRD complex.

The protein localises to the nucleus. Its function is as follows. Core component of the DBIRD complex, a multiprotein complex that acts at the interface between core mRNP particles and RNA polymerase II (RNAPII) and integrates transcript elongation with the regulation of alternative splicing. The polypeptide is DBIRD complex subunit ZNF326 (znf326) (Xenopus laevis (African clawed frog)).